We begin with the raw amino-acid sequence, 957 residues long: Leucine--tRNA ligase (957 aa).

Positions P66 to H77 match the 'HIGH' region motif. Residues K728–S732 carry the 'KMSKS' region motif. K731 contacts ATP.

Belongs to the class-I aminoacyl-tRNA synthetase family.

The protein resides in the cytoplasm. The enzyme catalyses tRNA(Leu) + L-leucine + ATP = L-leucyl-tRNA(Leu) + AMP + diphosphate. The sequence is that of Leucine--tRNA ligase from Streptomyces griseus subsp. griseus (strain JCM 4626 / CBS 651.72 / NBRC 13350 / KCC S-0626 / ISP 5235).